Reading from the N-terminus, the 293-residue chain is Triosephosphate isomerase (293 aa).

25 to 27 (NWK) is a binding site for substrate. The active-site Electrophile is the His117. The active-site Proton acceptor is Glu218.

This sequence belongs to the triosephosphate isomerase family. Homodimer.

The protein localises to the cytoplasm. The catalysed reaction is D-glyceraldehyde 3-phosphate = dihydroxyacetone phosphate. Its pathway is carbohydrate biosynthesis; gluconeogenesis. It functions in the pathway carbohydrate degradation; glycolysis; D-glyceraldehyde 3-phosphate from glycerone phosphate: step 1/1. Functionally, involved in the gluconeogenesis. Catalyzes stereospecifically the conversion of dihydroxyacetone phosphate (DHAP) to D-glyceraldehyde-3-phosphate (G3P). The chain is Triosephosphate isomerase from Tropheryma whipplei (strain TW08/27) (Whipple's bacillus).